An 88-amino-acid chain; its full sequence is Small ribosomal subunit protein bS20 (88 aa).

The protein belongs to the bacterial ribosomal protein bS20 family.

Functionally, binds directly to 16S ribosomal RNA. In Maricaulis maris (strain MCS10) (Caulobacter maris), this protein is Small ribosomal subunit protein bS20.